The primary structure comprises 368 residues: Multifunctional CCA protein (368 aa).

The ATP site is built by Gly-8 and Arg-11. The CTP site is built by Gly-8 and Arg-11. Residues Asp-21 and Asp-23 each coordinate Mg(2+). Residues Arg-91, Arg-137, and Arg-140 each coordinate ATP. Arg-91, Arg-137, and Arg-140 together coordinate CTP.

This sequence belongs to the tRNA nucleotidyltransferase/poly(A) polymerase family. Bacterial CCA-adding enzyme type 1 subfamily. In terms of assembly, monomer. Can also form homodimers and oligomers. The cofactor is Mg(2+). It depends on Ni(2+) as a cofactor.

It carries out the reaction a tRNA precursor + 2 CTP + ATP = a tRNA with a 3' CCA end + 3 diphosphate. The enzyme catalyses a tRNA with a 3' CCA end + 2 CTP + ATP = a tRNA with a 3' CCACCA end + 3 diphosphate. Its function is as follows. Catalyzes the addition and repair of the essential 3'-terminal CCA sequence in tRNAs without using a nucleic acid template. Adds these three nucleotides in the order of C, C, and A to the tRNA nucleotide-73, using CTP and ATP as substrates and producing inorganic pyrophosphate. tRNA 3'-terminal CCA addition is required both for tRNA processing and repair. Also involved in tRNA surveillance by mediating tandem CCA addition to generate a CCACCA at the 3' terminus of unstable tRNAs. While stable tRNAs receive only 3'-terminal CCA, unstable tRNAs are marked with CCACCA and rapidly degraded. The polypeptide is Multifunctional CCA protein (Pseudomonas putida (strain ATCC 47054 / DSM 6125 / CFBP 8728 / NCIMB 11950 / KT2440)).